A 228-amino-acid chain; its full sequence is Small ribosomal subunit protein uS2c (228 aa).

Belongs to the universal ribosomal protein uS2 family.

It localises to the plastid. The protein resides in the chloroplast. This is Small ribosomal subunit protein uS2c (rps2) from Mesostigma viride (Green alga).